The following is a 250-amino-acid chain: Diaminopimelate epimerase (250 aa).

Substrate-binding residues include Asn-11 and Asn-60. Residue Cys-69 is the Proton donor of the active site. Substrate contacts are provided by residues 70 to 71 (GN), Asn-164, and 182 to 183 (ER). Cys-192 (proton acceptor) is an active-site residue. 193–194 (GT) serves as a coordination point for substrate.

This sequence belongs to the diaminopimelate epimerase family. As to quaternary structure, homodimer.

The protein resides in the cytoplasm. The catalysed reaction is (2S,6S)-2,6-diaminopimelate = meso-2,6-diaminopimelate. The protein operates within amino-acid biosynthesis; L-lysine biosynthesis via DAP pathway; DL-2,6-diaminopimelate from LL-2,6-diaminopimelate: step 1/1. Functionally, catalyzes the stereoinversion of LL-2,6-diaminopimelate (L,L-DAP) to meso-diaminopimelate (meso-DAP), a precursor of L-lysine and an essential component of the bacterial peptidoglycan. The protein is Diaminopimelate epimerase of Nitratiruptor sp. (strain SB155-2).